We begin with the raw amino-acid sequence, 417 residues long: Histidine--tRNA ligase (417 aa).

This sequence belongs to the class-II aminoacyl-tRNA synthetase family. In terms of assembly, homodimer.

Its subcellular location is the cytoplasm. It catalyses the reaction tRNA(His) + L-histidine + ATP = L-histidyl-tRNA(His) + AMP + diphosphate + H(+). The sequence is that of Histidine--tRNA ligase from Nitratidesulfovibrio vulgaris (strain DP4) (Desulfovibrio vulgaris).